Here is a 180-residue protein sequence, read N- to C-terminus: NADH-quinone oxidoreductase subunit I (180 aa).

4Fe-4S ferredoxin-type domains are found at residues 50-80 and 90-119; these read LTRD…LQKA and EFFR…LTPD. [4Fe-4S] cluster-binding residues include Cys-60, Cys-63, Cys-66, Cys-70, Cys-99, Cys-102, Cys-105, and Cys-109.

This sequence belongs to the complex I 23 kDa subunit family. As to quaternary structure, NDH-1 is composed of 13 different subunits. Subunits NuoA, H, J, K, L, M, N constitute the membrane sector of the complex. The cofactor is [4Fe-4S] cluster.

It is found in the cell inner membrane. It catalyses the reaction a quinone + NADH + 5 H(+)(in) = a quinol + NAD(+) + 4 H(+)(out). NDH-1 shuttles electrons from NADH, via FMN and iron-sulfur (Fe-S) centers, to quinones in the respiratory chain. The immediate electron acceptor for the enzyme in this species is believed to be ubiquinone. Couples the redox reaction to proton translocation (for every two electrons transferred, four hydrogen ions are translocated across the cytoplasmic membrane), and thus conserves the redox energy in a proton gradient. The protein is NADH-quinone oxidoreductase subunit I of Shigella sonnei (strain Ss046).